The primary structure comprises 255 residues: Cytochrome c oxidase subunit 2 (255 aa).

An N-terminal signal peptide occupies residues 1–16 (MFNLFPPFGANTAIFN). At 17 to 43 (DAPQPWQVGFQDGASPTQEGITELHDS) the chain is on the mitochondrial intermembrane side. Residues 44-64 (IFFYLVIICFGVLWVLSSVIV) traverse the membrane as a helical segment. The Mitochondrial matrix segment spans residues 65 to 80 (NFNSNKSQLVYKYANH). A helical membrane pass occupies residues 81 to 101 (GTLIELIWTITPALVLIAIAF). Over 102–255 (PSFKLLYLMD…KYLAWIDSQA (154 aa)) the chain is Mitochondrial intermembrane. Positions 189, 224, 226, 228, 232, and 235 each coordinate Cu cation. Glutamate 226 is a binding site for Mg(2+).

Belongs to the cytochrome c oxidase subunit 2 family. Component of the cytochrome c oxidase (complex IV, CIV), a multisubunit enzyme composed of a catalytic core of 3 subunits and several supernumerary subunits. The complex exists as a monomer or a dimer and forms supercomplexes (SCs) in the inner mitochondrial membrane with ubiquinol-cytochrome c oxidoreductase (cytochrome b-c1 complex, complex III, CIII). The cofactor is Cu cation.

Its subcellular location is the mitochondrion inner membrane. The catalysed reaction is 4 Fe(II)-[cytochrome c] + O2 + 8 H(+)(in) = 4 Fe(III)-[cytochrome c] + 2 H2O + 4 H(+)(out). Functionally, component of the cytochrome c oxidase, the last enzyme in the mitochondrial electron transport chain which drives oxidative phosphorylation. The respiratory chain contains 3 multisubunit complexes succinate dehydrogenase (complex II, CII), ubiquinol-cytochrome c oxidoreductase (cytochrome b-c1 complex, complex III, CIII) and cytochrome c oxidase (complex IV, CIV), that cooperate to transfer electrons derived from NADH and succinate to molecular oxygen, creating an electrochemical gradient over the inner membrane that drives transmembrane transport and the ATP synthase. Cytochrome c oxidase is the component of the respiratory chain that catalyzes the reduction of oxygen to water. Electrons originating from reduced cytochrome c in the intermembrane space (IMS) are transferred via the dinuclear copper A center (CU(A)) of subunit 2 and heme A of subunit 1 to the active site in subunit 1, a binuclear center (BNC) formed by heme A3 and copper B (CU(B)). The BNC reduces molecular oxygen to 2 water molecules using 4 electrons from cytochrome c in the IMS and 4 protons from the mitochondrial matrix. The sequence is that of Cytochrome c oxidase subunit 2 (COX2) from Mycosarcoma maydis (Corn smut fungus).